A 218-amino-acid polypeptide reads, in one-letter code: Ras-related protein Rab-4A (218 aa).

Gly23, Thr24, Gly25, Lys26, Ser27, Cys28, Ser42, His44, and Thr45 together coordinate GTP. Ser27 serves as a coordination point for Mg(2+). The short motif at 44–49 is the Switch 1 element; sequence HTIGVE. Positions 45 and 68 each coordinate Mg(2+). The Switch 2 signature appears at 70 to 79; it reads AGQERFRSVT. Gly71 contributes to the GTP binding site. Residue Gln72 is modified to 5-glutamyl serotonin. Asn126, Lys127, Asp129, Ala157, and Leu158 together coordinate GTP. Ser190 carries the post-translational modification Phosphoserine. A Phosphoserine; by CDK1 modification is found at Ser204. Residues Cys216 and Cys218 are each lipidated (S-geranylgeranyl cysteine). Cysteine methyl ester is present on Cys218.

The protein belongs to the small GTPase superfamily. Rab family. As to quaternary structure, interacts with SGSM1, SGSM2 and SGSM3. Interacts with RAB11FIP1, RABEP1, ZFYVE20 and RUFY1. Interacts (membrane-bound form) with NDRG1; the interaction involves NDRG1 in vesicular recycling of E-cadherin. Interacts (in GTP-bound form) with GRIPAP1 (via N-terminus). Interacts with RABEP1 and RBSN. Does not interact with HPS4. Does not interact with HPS4. Interacts with RABEP2; this interaction may mediate VEGFR2 cell surface expression. Mg(2+) is required as a cofactor. Post-translationally, serotonylation of Gln-72 by TGM2 during activation and aggregation of platelets leads to constitutive activation of GTPase activity. Phosphorylated by CDK1 kinase during mitosis. In terms of tissue distribution, expressed in the central nervous system, including cortex, cerebellum, midbrain and spinal cord, and in the kidney, lung, liver and spleen.

The protein resides in the membrane. It localises to the cytoplasm. Its subcellular location is the early endosome membrane. It is found in the recycling endosome membrane. It catalyses the reaction GTP + H2O = GDP + phosphate + H(+). Its activity is regulated as follows. Regulated by guanine nucleotide exchange factors (GEFs) which promote the exchange of bound GDP for free GTP. Regulated by GTPase activating proteins (GAPs) which increase the GTP hydrolysis activity. Inhibited by GDP dissociation inhibitors (GDIs). Functionally, the small GTPases Rab are key regulators of intracellular membrane trafficking, from the formation of transport vesicles to their fusion with membranes. Rabs cycle between an inactive GDP-bound form and an active GTP-bound form that is able to recruit to membranes different sets of downstream effectors directly responsible for vesicle formation, movement, tethering and fusion. RAB4A is involved in protein transport. Also plays a role in vesicular traffic. Mediates VEGFR2 endosomal trafficking to enhance VEGFR2 signaling. Acts as a regulator of platelet alpha-granule release during activation and aggregation of platelets. This chain is Ras-related protein Rab-4A, found in Mus musculus (Mouse).